The primary structure comprises 688 residues: Acyl-CoA synthetase short-chain family member B, mitochondrial (688 aa).

The protein belongs to the ATP-dependent AMP-binding enzyme family.

It is found in the mitochondrion. It catalyses the reaction acetate + ATP + CoA = acetyl-CoA + AMP + diphosphate. In terms of biological role, activates acetate so that it can be used for lipid synthesis or for energy generation. This is Acyl-CoA synthetase short-chain family member B, mitochondrial (aslB) from Dictyostelium discoideum (Social amoeba).